A 318-amino-acid polypeptide reads, in one-letter code: Methionyl-tRNA formyltransferase (318 aa).

113-116 (SLLP) serves as a coordination point for (6S)-5,6,7,8-tetrahydrofolate.

Belongs to the Fmt family.

It catalyses the reaction L-methionyl-tRNA(fMet) + (6R)-10-formyltetrahydrofolate = N-formyl-L-methionyl-tRNA(fMet) + (6S)-5,6,7,8-tetrahydrofolate + H(+). Functionally, attaches a formyl group to the free amino group of methionyl-tRNA(fMet). The formyl group appears to play a dual role in the initiator identity of N-formylmethionyl-tRNA by promoting its recognition by IF2 and preventing the misappropriation of this tRNA by the elongation apparatus. In Hahella chejuensis (strain KCTC 2396), this protein is Methionyl-tRNA formyltransferase.